We begin with the raw amino-acid sequence, 588 residues long: Outer membrane transporter CdiB (588 aa).

The POTRA domain occupies 104 to 179 (FTVSSIVVSG…GVLHITVMEG (76 aa)).

Belongs to the TPS (TC 1.B.20) family.

It localises to the cell outer membrane. Functionally, potential outer membrane protein component of a toxin-immunity protein module, which functions as a cellular contact-dependent growth inhibition (CDI) system. CDI modules allow bacteria to communicate with and inhibit the growth of closely related neighboring bacteria in a contact-dependent fashion. This protein may be required for secretion and assembly of the CdiA toxin protein. Inhibitory cells must be in logarithmic (not stationary) phase to inhibit growth of their targets, while the presence of P or S but not type 1 pili protects the target cells against growth inhibition. Probable member of a two partner secretion pathway (TPS) in which it mediates the secretion of CdiA. This Escherichia coli protein is Outer membrane transporter CdiB.